A 278-amino-acid polypeptide reads, in one-letter code: Large ribosomal subunit protein uL2 (278 aa).

Disordered stretches follow at residues 32-57 (ALTE…IGGG) and 221-278 (RGVA…KKKR). Residues 269–278 (IRSRHAKKKR) show a composition bias toward basic residues.

It belongs to the universal ribosomal protein uL2 family. Part of the 50S ribosomal subunit. Forms a bridge to the 30S subunit in the 70S ribosome.

Functionally, one of the primary rRNA binding proteins. Required for association of the 30S and 50S subunits to form the 70S ribosome, for tRNA binding and peptide bond formation. It has been suggested to have peptidyltransferase activity; this is somewhat controversial. Makes several contacts with the 16S rRNA in the 70S ribosome. The protein is Large ribosomal subunit protein uL2 of Zymomonas mobilis subsp. mobilis (strain ATCC 31821 / ZM4 / CP4).